The primary structure comprises 285 residues: Ribosomal RNA large subunit methyltransferase F (285 aa).

Belongs to the methyltransferase superfamily. METTL16/RlmF family.

The protein resides in the cytoplasm. The catalysed reaction is adenosine(1618) in 23S rRNA + S-adenosyl-L-methionine = N(6)-methyladenosine(1618) in 23S rRNA + S-adenosyl-L-homocysteine + H(+). In terms of biological role, specifically methylates the adenine in position 1618 of 23S rRNA. This is Ribosomal RNA large subunit methyltransferase F from Christiangramia forsetii (strain DSM 17595 / CGMCC 1.15422 / KT0803) (Gramella forsetii).